The sequence spans 78 residues: DNA-directed RNA polymerase subunit omega (78 aa).

Belongs to the RNA polymerase subunit omega family. As to quaternary structure, in cyanobacteria the RNAP catalytic core is composed of 2 alpha, 1 beta, 1 beta', 1 gamma and 1 omega subunit. When a sigma factor is associated with the core the holoenzyme is formed, which can initiate transcription.

It catalyses the reaction RNA(n) + a ribonucleoside 5'-triphosphate = RNA(n+1) + diphosphate. Functionally, promotes RNA polymerase assembly. Latches the N- and C-terminal regions of the beta' subunit thereby facilitating its interaction with the beta and alpha subunits. The sequence is that of DNA-directed RNA polymerase subunit omega from Prochlorococcus marinus (strain MIT 9301).